A 269-amino-acid polypeptide reads, in one-letter code: Cytochrome c oxidase subunit 3 (269 aa).

Residues 1–22 (MTNLIRSNFQDHPFHLVSPSPW) lie on the Mitochondrial matrix side of the membrane. Residues 23 to 41 (PLNTSVCLLNLTTTGALSM) traverse the membrane as a helical segment. The Mitochondrial intermembrane segment spans residues 42–48 (HNFNNIH). Residues 49-73 (YLYYIALIGLVSAMFLWFRDIISEG) traverse the membrane as a helical segment. Residues 74–80 (TFLGDHT) are Mitochondrial matrix-facing. A helical transmembrane segment spans residues 81–114 (LAVQRGLNLGIILFIVSEALFFLAIFWAFFHSAL). At 115 to 137 (TPTVELGAQWPPIGIEPVNPFEL) the chain is on the mitochondrial intermembrane side. Residues 138-161 (PLLNTVILLSSGATITYAHHALIK) form a helical membrane-spanning segment. Residues 162 to 164 (GER) are Mitochondrial matrix-facing. Residues 165 to 188 (EGALYGSIATILLAIIFTGFQGVE) form a helical membrane-spanning segment. The Mitochondrial intermembrane portion of the chain corresponds to 189-201 (YSVSSFTISDGAF). The helical transmembrane segment at 202-230 (GTCFFFSTGFHGIHVIIGTIFLAVALWRI) threads the bilayer. Topologically, residues 231-248 (FAYHLTDNHHVGFEGGIL) are mitochondrial matrix. Residues 249–265 (YWHFVDVVWLFLYISVY) traverse the membrane as a helical segment. Over 266 to 269 (YWGS) the chain is Mitochondrial intermembrane.

It belongs to the cytochrome c oxidase subunit 3 family. As to quaternary structure, component of the cytochrome c oxidase (complex IV, CIV), a multisubunit enzyme composed of 11 subunits. The complex is composed of a catalytic core of 3 subunits Cox1, Cox2 and Cox3, encoded in the mitochondrial DNA, and 8 supernumerary subunits Cox4, Cox5a/Cox5, Cox6, Cox7, Cox8, Cox7a/Cox9, Cox6b/Cox12 and Cox6a/Cox13, which are encoded in the nuclear genome. The complex exists as a monomer or a dimer and forms respiratory supercomplexes (SCs) in the inner mitochondrial membrane with NADH-ubiquinone oxidoreductase (complex I, CI) and ubiquinol-cytochrome c oxidoreductase (cytochrome b-c1 complex, complex III, CIII), resulting in various different assemblies (supercomplexes I(1)IV(1), I(1)III(3)IV(2), III(2)IV(1) and III(2)IV(2) as well as larger supercomplexes of compositions like I(1)III(2)IV(5-6)).

The protein resides in the mitochondrion inner membrane. It carries out the reaction 4 Fe(II)-[cytochrome c] + O2 + 8 H(+)(in) = 4 Fe(III)-[cytochrome c] + 2 H2O + 4 H(+)(out). In terms of biological role, component of the cytochrome c oxidase, the last enzyme in the mitochondrial electron transport chain which drives oxidative phosphorylation. The respiratory chain contains 3 multisubunit complexes succinate dehydrogenase (complex II, CII), ubiquinol-cytochrome c oxidoreductase (cytochrome b-c1 complex, complex III, CIII) and cytochrome c oxidase (complex IV, CIV), that cooperate to transfer electrons derived from NADH and succinate to molecular oxygen, creating an electrochemical gradient over the inner membrane that drives transmembrane transport and the ATP synthase. Cytochrome c oxidase is the component of the respiratory chain that catalyzes the reduction of oxygen to water. Electrons originating from reduced cytochrome c in the intermembrane space (IMS) are transferred via the dinuclear copper A center (CU(A)) of Cox2 and heme A of Cox1 to the active site in Cox1, a binuclear center (BNC) formed by heme A3 and copper B (CU(B)). The BNC reduces molecular oxygen to 2 water molecules using 4 electrons from cytochrome c in the IMS and 4 protons from the mitochondrial matrix. The protein is Cytochrome c oxidase subunit 3 (cox-3) of Neurospora crassa (strain ATCC 24698 / 74-OR23-1A / CBS 708.71 / DSM 1257 / FGSC 987).